The sequence spans 560 residues: Phenol regulator MopR (560 aa).

Histidine 106 and tryptophan 134 together coordinate phenol. The Zn(2+) site is built by cysteine 155, glutamate 178, cysteine 181, and cysteine 189. Residues 245-474 (AVGESVAYRK…LENLLERATL (230 aa)) form the Sigma-54 factor interaction domain. ATP is bound by residues 273-280 (GETGVGKE) and 336-345 (AHGGTIFLDE).

As to quaternary structure, homodimer.

Activity is triggered by phenol binding. Involved in the regulation of the phenol degradation pathway. Activates phenol hydroxylase expression in the presence of phenol. This Acinetobacter guillouiae (Acinetobacter genomosp. 11) protein is Phenol regulator MopR.